The following is a 1325-amino-acid chain: Protein suppressor of sable (1325 aa).

Disordered stretches follow at residues 1–36 (MSVA…SKIQ) and 74–326 (VCLQ…GGSN). Residues 9-30 (PLIDLEEDLEDGEIDDDEEDEQ) show a composition bias toward acidic residues. Polar residues predominate over residues 119–131 (RSSNQDTSDQSLE). Positions 138-327 (ATANPLLQST…GQEKMGGSNR (190 aa)) are highly charged. Residues 149–158 (SSRRRKRKKE) are compositionally biased toward basic residues. The stretch at 149–179 (SSRRRKRKKEREREQKKDKEQQNRSRRDEND) forms a coiled coil. Residues 159 to 178 (REREQKKDKEQQNRSRRDEN) show a composition bias toward basic and acidic residues. Residues 236–246 (AGLGAGGGGGY) show a composition bias toward gly residues. Residues 276-296 (NEKEHQRGVNNRKRRDRDRLE) are a coiled coil. C3H1-type zinc fingers lie at residues 330–357 (PRKL…HKEF) and 358–381 (PCKY…HGEP). The stretch at 444 to 478 (KRQDHQMQQQQQQLQHQQLQQQQEQQQTQQQAAAD) forms a coiled coil. The span at 499–509 (KRKSRWTEKMG) shows a compositional bias: basic and acidic residues. 8 disordered regions span residues 499–535 (KRKS…LPPH), 588–622 (KAED…KSNG), 639–695 (FSGN…PSVF), 710–745 (SARQ…IGGG), 780–835 (AHSG…ALPP), 979–1058 (DLET…GGSK), 1143–1170 (EPNG…GGGV), and 1295–1325 (RGGH…NRNI). Ser-524 bears the Phosphoserine mark. The segment covering 594–606 (PQTQAELESSTPP) has biased composition (polar residues). The residue at position 604 (Thr-604) is a Phosphothreonine. The segment covering 644-668 (PLDDDRDDDEQLIIDDGNDSTAEED) has biased composition (acidic residues). Ser-663 is modified (phosphoserine). At Thr-664 the chain carries Phosphothreonine. Residues 710-726 (SARQLLPASATSPNQEN) show a composition bias toward polar residues. Positions 790 to 800 (SNENSNSNSHS) are enriched in low complexity. A compositionally biased stretch (pro residues) spans 1003–1015 (SVPPPSMRVPPPN). Residues 1021-1033 (PTVRTDPRRDPRR) are compositionally biased toward basic and acidic residues. Residues 1042-1056 (GASTANTTAPNASGG) are compositionally biased toward low complexity. Gly residues-rich tracts occupy residues 1149 to 1170 (AALG…GGGV) and 1295 to 1309 (RGGH…GNGN).

This sequence belongs to the suppressor of sable family. In terms of assembly, interacts with Wdr82.

It is found in the nucleus. The protein localises to the chromosome. RNA-binding protein that suppresses transcription of some RNAs. Together with Wdr82, part of a transcription termination checkpoint that promotes transcription termination of RNAs and their subsequent degradation by the nuclear exosome. Promotes transcription termination of aberrant RNAs, transcripts from genes containing a transposon inserted at their very 5' end or RNAs from heat-shock-inducible repetitive element. Binds RNA preferentially at a sequence that resembles a cryptic 5'-splice site. In Drosophila melanogaster (Fruit fly), this protein is Protein suppressor of sable.